We begin with the raw amino-acid sequence, 197 residues long: Probable GTP-binding protein EngB (197 aa).

An EngB-type G domain is found at 25–197 (SAPEIAFAGR…VRDEFFKFTR (173 aa)). GTP contacts are provided by residues 33 to 40 (GRSNVGKS), 60 to 64 (GCTRQ), 79 to 82 (DLPG), 146 to 149 (TKID), and 177 to 179 (MSI). 2 residues coordinate Mg(2+): serine 40 and threonine 62.

It belongs to the TRAFAC class TrmE-Era-EngA-EngB-Septin-like GTPase superfamily. EngB GTPase family. Requires Mg(2+) as cofactor.

Necessary for normal cell division and for the maintenance of normal septation. This chain is Probable GTP-binding protein EngB, found in Wolbachia sp. subsp. Drosophila simulans (strain wRi).